Consider the following 230-residue polypeptide: Cytidylate kinase (230 aa).

10-18 (GFSSTGKST) serves as a coordination point for ATP.

The protein belongs to the cytidylate kinase family. Type 1 subfamily.

Its subcellular location is the cytoplasm. The catalysed reaction is CMP + ATP = CDP + ADP. It catalyses the reaction dCMP + ATP = dCDP + ADP. In Flavobacterium johnsoniae (strain ATCC 17061 / DSM 2064 / JCM 8514 / BCRC 14874 / CCUG 350202 / NBRC 14942 / NCIMB 11054 / UW101) (Cytophaga johnsonae), this protein is Cytidylate kinase.